Reading from the N-terminus, the 108-residue chain is MALPAGYSRNWSGPWPKTPGRVLGTAFVRLYQLTLSGFIGNSCRHFPTCSEYAYEAIARHGLWAGGWMGLFRVMHCGPGGTHGIDPVPEILQPRHAWWAPWRLWKLKP.

It belongs to the UPF0161 family.

Its subcellular location is the cell inner membrane. Functionally, could be involved in insertion of integral membrane proteins into the membrane. This Chelativorans sp. (strain BNC1) protein is Putative membrane protein insertion efficiency factor.